A 146-amino-acid chain; its full sequence is Globin (146 aa).

Position 1 is an N-acetylserine (Ser-1). A Globin domain is found at 1-146 (SLSGAEADLL…IIDALKKAGK (146 aa)). His-95 contacts heme b.

Belongs to the globin family. Monomer.

This is Globin from Bursatella leachii (Ragged sea hare).